Here is a 364-residue protein sequence, read N- to C-terminus: DNA polymerase processivity factor (364 aa).

Disordered regions lie at residues 1-24, 284-306, and 325-364; these read MDRS…KEPP, DDPK…KVEE, and VPTK…RCGM.

This sequence belongs to the herpesviridae polymerase accessory protein family.

Its function is as follows. Accessory subunit of the DNA polymerase that acts to increase the processivity of polymerization. In Homo sapiens (Human), this protein is DNA polymerase processivity factor (U27).